A 266-amino-acid chain; its full sequence is Chorismate mutase (266 aa).

Residues 7-263 (MADSERALNL…EVEYLMQRLI (257 aa)) enclose the Chorismate mutase domain. Residues R77, R78, N144, G146, S147, and T150 each coordinate L-tyrosine. L-tryptophan-binding residues include N144, G146, and S147.

In terms of assembly, homodimer.

It localises to the cytoplasm. The catalysed reaction is chorismate = prephenate. It participates in metabolic intermediate biosynthesis; prephenate biosynthesis; prephenate from chorismate: step 1/1. With respect to regulation, each dimer has two allosteric binding sites that can bind the regulatory effectors tryptophan or tyrosine. Can bind either one tryptophan or one tyrosine, two tryptophan or two tyrosine or one tryptophan and one tyrosine, which differentially affect the catalytic activity. Activated by tryptophan and subject to feedback inhibition by tyrosine. In the presence of both tryptophan and tyrosine, the enzyme is in the activated state. In terms of biological role, catalyzes the Claisen rearrangement of chorismate to prephenate. Acts at the first branch point in the aromatic amino acid pathway where it steers biosynthesis towards phenylalanine and tyrosine, and away from tryptophan. This chain is Chorismate mutase, found in Trichoderma parareesei (Filamentous fungus).